A 222-amino-acid chain; its full sequence is Ras-related protein Rab-21 (222 aa).

Ala2 is modified (N-acetylalanine). 10 residues coordinate GTP: Gly25, Gly28, Lys29, Thr30, Ser31, Asn42, Asp43, His45, Thr47, and Thr48. Thr30 lines the Mg(2+) pocket. Residues 40 to 53 carry the Switch 1 motif; the sequence is KFNDKHITTLQASF. The Mg(2+) site is built by Thr48 and Asp71. Positions 73-91 match the Switch 2 motif; it reads AGQERFHALGPIYYRDSNG. GTP contacts are provided by Gly74, Asn129, Lys130, Asp132, Ala160, and Lys161. 2 S-geranylgeranyl cysteine lipidation sites follow: Cys218 and Cys219. Cysteine methyl ester is present on Cys219. The propeptide at 220–222 is removed in mature form; the sequence is SSG.

This sequence belongs to the small GTPase superfamily. Rab family. In terms of assembly, interacts with the cytoplasmic tail of integrins ITGA1, ITGA2, ITGA5, ITGA6, ITGA11 and ITGB1; this interaction is dependent upon its GDP/GTP cycle. Interacts with RABGEF1 (via VPS9 domain). Interacts with ANKRD27. Interacts (in GTP-bound form) with VAMP8 in response to starvation; the interaction probably regulates VAMP8 endolysosomal trafficking. Interacts (active GTP-bound form) with TMED10; the interaction is indirect and regulates TMED10 abundance and localization at the Golgi. Mg(2+) serves as cofactor.

Its subcellular location is the endoplasmic reticulum membrane. It is found in the golgi apparatus. The protein localises to the trans-Golgi network. It localises to the golgi apparatus membrane. The protein resides in the early endosome membrane. Its subcellular location is the cytoplasmic vesicle membrane. It is found in the cleavage furrow. The protein localises to the cell projection. It localises to the neuron projection. The catalysed reaction is GTP + H2O = GDP + phosphate + H(+). With respect to regulation, regulated by guanine nucleotide exchange factors (GEFs) including ANKRD27 and RABGEF1, which promote the exchange of bound GDP for free GTP. Regulated by GTPase activating proteins (GAPs) which increase the GTP hydrolysis activity. Inhibited by GDP dissociation inhibitors (GDIs). Its function is as follows. The small GTPases Rab are key regulators of intracellular membrane trafficking, from the formation of transport vesicles to their fusion with membranes. Rabs cycle between an inactive GDP-bound form and an active GTP-bound form that is able to recruit to membranes different sets of downstream effectors directly responsible for vesicle formation, movement, tethering and fusion. RAB21 is involved in membrane trafficking control. Regulates integrin internalization and recycling, but does not influence the traffic of endosomally translocated receptors in general. As a result, may regulate cell adhesion and migration. During the mitosis of adherent cells, controls the endosomal trafficking of integrins which is required for the successful completion of cytokinesis. Involved in neurite growth. Following SBF2/MTMT13-mediated activation in response to starvation-induced autophagy, binds to and regulates SNARE protein VAMP8 endolysosomal transport required for SNARE-mediated autophagosome-lysosome fusion. Modulates protein levels of the cargo receptors TMED2 and TMED10, and required for appropriate Golgi localization of TMED10. The polypeptide is Ras-related protein Rab-21 (RAB21) (Bos taurus (Bovine)).